We begin with the raw amino-acid sequence, 267 residues long: Diphthine synthase (267 aa).

Residues L9, D87, I90, 115–116 (SI), L166, L205, and H230 contribute to the S-adenosyl-L-methionine site.

Belongs to the diphthine synthase family. In terms of assembly, homodimer.

The catalysed reaction is 2-[(3S)-amino-3-carboxypropyl]-L-histidyl-[translation elongation factor 2] + 3 S-adenosyl-L-methionine = diphthine-[translation elongation factor 2] + 3 S-adenosyl-L-homocysteine + 3 H(+). The protein operates within protein modification; peptidyl-diphthamide biosynthesis. S-adenosyl-L-methionine-dependent methyltransferase that catalyzes the trimethylation of the amino group of the modified target histidine residue in translation elongation factor 2 (EF-2), to form an intermediate called diphthine. The three successive methylation reactions represent the second step of diphthamide biosynthesis. This is Diphthine synthase from Staphylothermus marinus (strain ATCC 43588 / DSM 3639 / JCM 9404 / F1).